The primary structure comprises 247 residues: ATP synthase subunit a, chloroplastic (247 aa).

5 helical membrane passes run 38-58, 95-115, 134-154, 199-219, and 220-240; these read QVLITSWVVIAILLGSATLAV, VPFIGTMFLFIFVSNWSGALL, INTTVALALLTSVAYFYAGLT, LVVVVLVSLVPSVVPIPVMFL, and GLFTSGIQALIFATLAAAYIG.

It belongs to the ATPase A chain family. In terms of assembly, F-type ATPases have 2 components, CF(1) - the catalytic core - and CF(0) - the membrane proton channel. CF(1) has five subunits: alpha(3), beta(3), gamma(1), delta(1), epsilon(1). CF(0) has four main subunits: a, b, b' and c.

The protein localises to the plastid. It localises to the chloroplast thylakoid membrane. In terms of biological role, key component of the proton channel; it plays a direct role in the translocation of protons across the membrane. The protein is ATP synthase subunit a, chloroplastic of Guizotia abyssinica (Niger).